The following is a 215-amino-acid chain: ATP-dependent Clp protease proteolytic subunit (215 aa).

Catalysis depends on serine 115, which acts as the Nucleophile. The active site involves histidine 140.

This sequence belongs to the peptidase S14 family. In terms of assembly, fourteen ClpP subunits assemble into 2 heptameric rings which stack back to back to give a disk-like structure with a central cavity, resembling the structure of eukaryotic proteasomes.

It is found in the cytoplasm. The catalysed reaction is Hydrolysis of proteins to small peptides in the presence of ATP and magnesium. alpha-casein is the usual test substrate. In the absence of ATP, only oligopeptides shorter than five residues are hydrolyzed (such as succinyl-Leu-Tyr-|-NHMec, and Leu-Tyr-Leu-|-Tyr-Trp, in which cleavage of the -Tyr-|-Leu- and -Tyr-|-Trp bonds also occurs).. Functionally, cleaves peptides in various proteins in a process that requires ATP hydrolysis. Has a chymotrypsin-like activity. Plays a major role in the degradation of misfolded proteins. The chain is ATP-dependent Clp protease proteolytic subunit from Anaplasma marginale (strain Florida).